The sequence spans 282 residues: MQIVNISAYKFVSLNDIETLRPEMRSRCEDLELKGTILLAPEGINMFLAGPRESIDGFMAWLHADTRFADIAPKESLSDNQPFKRMLVRAKKEIITMKRPLIRPEEGRAPSVRPVDLKRWLDQGHDDEGRPVVMLDTRNDFEVAVGTFDNVVEYNLTKFSEFPDVIEARKAEFEGKTVVSFCTGGIRCEKAAIHMQEVGIGHVYQLEGGILKYFEEVGGDHYRGDCFVFDYRTALNPNLEPAGPKQCFACRAVVTAEEQQSPHYVVGKSCPHCVGRHDQAAA.

A Rhodanese domain is found at 128–222; sequence EGRPVVMLDT…YFEEVGGDHY (95 aa). Cys182 (cysteine persulfide intermediate) is an active-site residue.

It belongs to the TrhO family.

It catalyses the reaction uridine(34) in tRNA + AH2 + O2 = 5-hydroxyuridine(34) in tRNA + A + H2O. Functionally, catalyzes oxygen-dependent 5-hydroxyuridine (ho5U) modification at position 34 in tRNAs. The polypeptide is tRNA uridine(34) hydroxylase (Cupriavidus pinatubonensis (strain JMP 134 / LMG 1197) (Cupriavidus necator (strain JMP 134))).